The sequence spans 418 residues: Serine hydroxymethyltransferase 2 (418 aa).

Residues Leu121 and 125-127 each bind (6S)-5,6,7,8-tetrahydrofolate; that span reads GHL. Position 230 is an N6-(pyridoxal phosphate)lysine (Lys230). Residue 355–357 coordinates (6S)-5,6,7,8-tetrahydrofolate; sequence SPF.

The protein belongs to the SHMT family. As to quaternary structure, homodimer. Pyridoxal 5'-phosphate is required as a cofactor.

The protein localises to the cytoplasm. The enzyme catalyses (6R)-5,10-methylene-5,6,7,8-tetrahydrofolate + glycine + H2O = (6S)-5,6,7,8-tetrahydrofolate + L-serine. The protein operates within one-carbon metabolism; tetrahydrofolate interconversion. Its pathway is amino-acid biosynthesis; glycine biosynthesis; glycine from L-serine: step 1/1. Catalyzes the reversible interconversion of serine and glycine with tetrahydrofolate (THF) serving as the one-carbon carrier. This reaction serves as the major source of one-carbon groups required for the biosynthesis of purines, thymidylate, methionine, and other important biomolecules. Also exhibits THF-independent aldolase activity toward beta-hydroxyamino acids, producing glycine and aldehydes, via a retro-aldol mechanism. This Pseudomonas aeruginosa (strain ATCC 15692 / DSM 22644 / CIP 104116 / JCM 14847 / LMG 12228 / 1C / PRS 101 / PAO1) protein is Serine hydroxymethyltransferase 2.